The sequence spans 766 residues: Phospholipid phosphatase-related protein type 4 (766 aa).

Serine 37 bears the Phosphoserine mark. The next 3 helical transmembrane spans lie at 68–88, 120–140, and 179–199; these read LPCF…SLYF, AIPF…TIMV, and FVGV…IIQL. N-linked (GlcNAc...) asparagine glycosylation is found at asparagine 215 and asparagine 220. A helical transmembrane segment spans residues 248 to 268; it reads SFPSQHATLAAFAAVYVSMYF. A glycan (N-linked (GlcNAc...) asparagine) is linked at asparagine 269. A run of 2 helical transmembrane segments spans residues 277–297 and 309–329; these read KLLK…CGLT and VYCG…YAVG. A Phosphoserine modification is found at serine 347. Residue asparagine 363 is glycosylated (N-linked (GlcNAc...) asparagine). Phosphoserine is present on serine 386. Asparagine 433 carries N-linked (GlcNAc...) asparagine glycosylation. Position 439 is a phosphoserine (serine 439). Residues 454 to 494 form a disordered region; sequence SKNESRKMSLQVMDTEPEGQSPPRSIEMRSSSEPSRVGVNG. N-linked (GlcNAc...) asparagine glycosylation occurs at asparagine 456. A phosphoserine mark is found at serine 462 and serine 474. Residues asparagine 515, asparagine 545, and asparagine 570 are each glycosylated (N-linked (GlcNAc...) asparagine). At serine 608 the chain carries Phosphoserine. Disordered regions lie at residues 634–654, 672–701, and 742–766; these read PIIQ…KWKA, DSES…HHHH, and ERSN…AYKD. A compositionally biased stretch (basic and acidic residues) spans 672–697; it reads DSESCESLKDSFGSGDRKRSNIDSNE. Residues 743–752 are compositionally biased toward polar residues; the sequence is RSNSPENTRN.

The protein belongs to the PA-phosphatase related phosphoesterase family. O-glycosylated. Probably at Ser-347. Brain-specific, it is exclusively expressed in neurons (at protein level).

The protein resides in the postsynaptic density membrane. In terms of biological role, postsynaptic density membrane protein that indirectly regulates glutamatergic synaptic transmission through lysophosphatidic acid (LPA)-mediated signaling pathways. Binds lysophosphatidic acid (LPA) and mediates its internalization into cells. Could act as receptor or a transporter of this lipid at the post-synaptic membrane. Modulates lysophosphatidic acid (LPA) activity in neuron axonal outgrowth during development by attenuating phospholipid-induced axon collapse. The sequence is that of Phospholipid phosphatase-related protein type 4 from Mus musculus (Mouse).